We begin with the raw amino-acid sequence, 540 residues long: Phosphomethylpyrimidine synthase (540 aa).

Residues asparagine 143, methionine 172, tyrosine 201, histidine 237, 257-259 (SRG), 298-301 (DGLR), and glutamate 337 each bind substrate. Histidine 341 provides a ligand contact to Zn(2+). Residue tyrosine 364 coordinates substrate. Histidine 405 contacts Zn(2+). The [4Fe-4S] cluster site is built by cysteine 485, cysteine 488, and cysteine 493.

The protein belongs to the ThiC family. [4Fe-4S] cluster serves as cofactor.

The enzyme catalyses 5-amino-1-(5-phospho-beta-D-ribosyl)imidazole + S-adenosyl-L-methionine = 4-amino-2-methyl-5-(phosphooxymethyl)pyrimidine + CO + 5'-deoxyadenosine + formate + L-methionine + 3 H(+). It functions in the pathway cofactor biosynthesis; thiamine diphosphate biosynthesis. Functionally, catalyzes the synthesis of the hydroxymethylpyrimidine phosphate (HMP-P) moiety of thiamine from aminoimidazole ribotide (AIR) in a radical S-adenosyl-L-methionine (SAM)-dependent reaction. The sequence is that of Phosphomethylpyrimidine synthase from Mycobacterium avium (strain 104).